A 435-amino-acid chain; its full sequence is Citrate synthase (435 aa).

Catalysis depends on residues His311 and Asp370.

This sequence belongs to the citrate synthase family.

It catalyses the reaction oxaloacetate + acetyl-CoA + H2O = citrate + CoA + H(+). It functions in the pathway carbohydrate metabolism; tricarboxylic acid cycle; isocitrate from oxaloacetate: step 1/2. This chain is Citrate synthase (gltA), found in Rickettsia slovaca (strain 13-B).